A 316-amino-acid chain; its full sequence is MAVSCNHSAILFSPSSTAGSSSVTSSSSLIGFPRFQTLRFKSRSVYSKSRVSSPVSALPLRSLEALIFDCDGVILESENLHRQAYNDAFSHFDVRCPPSSSESLDWSLEFYDKFQNLVGGGKPKMRWYFKENGWPTSTIFDSPPQNDDDRAKLIDTLQDWKTERYKEIIKSGSVEPRPGVIRLMDEAKAAGKKLAVCSAATKSSVILCLENLIDIERFQGLDCFLAGDDVKEKKPDPSIYITAAEKLGVSVKDCLVVEDSVIGLQAATKAGMSCVITYTSSTSDQNFNDAIAVYPDLSNVKLKDLETLLQTIVTAA.

A chloroplast-targeting transit peptide spans methionine 1 to tyrosine 46. The active-site Nucleophile is aspartate 69. Mg(2+) is bound by residues aspartate 69, aspartate 71, and aspartate 259. Aspartate 71 acts as the Proton donor in catalysis.

Belongs to the HAD-like hydrolase superfamily. DOG/GPP family. Mg(2+) serves as cofactor.

Its subcellular location is the plastid. The protein resides in the chloroplast. This is Haloacid dehalogenase-like hydrolase domain-containing protein At4g39970 from Arabidopsis thaliana (Mouse-ear cress).